The following is a 95-amino-acid chain: Co-chaperonin GroES (95 aa).

This sequence belongs to the GroES chaperonin family. As to quaternary structure, heptamer of 7 subunits arranged in a ring. Interacts with the chaperonin GroEL.

It localises to the cytoplasm. Together with the chaperonin GroEL, plays an essential role in assisting protein folding. The GroEL-GroES system forms a nano-cage that allows encapsulation of the non-native substrate proteins and provides a physical environment optimized to promote and accelerate protein folding. GroES binds to the apical surface of the GroEL ring, thereby capping the opening of the GroEL channel. This chain is Co-chaperonin GroES, found in Pseudoalteromonas translucida (strain TAC 125).